We begin with the raw amino-acid sequence, 301 residues long: Nucleotide-binding protein MAB_2783c (301 aa).

An ATP-binding site is contributed by 24-31 (GLSGAGRG). Position 75–78 (75–78 (DVRS)) interacts with GTP.

The protein belongs to the RapZ-like family.

Functionally, displays ATPase and GTPase activities. The protein is Nucleotide-binding protein MAB_2783c of Mycobacteroides abscessus (strain ATCC 19977 / DSM 44196 / CCUG 20993 / CIP 104536 / JCM 13569 / NCTC 13031 / TMC 1543 / L948) (Mycobacterium abscessus).